A 77-amino-acid polypeptide reads, in one-letter code: Acyl carrier protein (77 aa).

Residues 2 to 77 (SSIEERVNKI…SAVDYIKAHS (76 aa)) enclose the Carrier domain. Ser37 is subject to O-(pantetheine 4'-phosphoryl)serine.

It belongs to the acyl carrier protein (ACP) family. 4'-phosphopantetheine is transferred from CoA to a specific serine of apo-ACP by AcpS. This modification is essential for activity because fatty acids are bound in thioester linkage to the sulfhydryl of the prosthetic group.

It is found in the cytoplasm. The protein operates within lipid metabolism; fatty acid biosynthesis. In terms of biological role, carrier of the growing fatty acid chain in fatty acid biosynthesis. The chain is Acyl carrier protein from Alcanivorax borkumensis (strain ATCC 700651 / DSM 11573 / NCIMB 13689 / SK2).